The sequence spans 185 residues: Ribosome-recycling factor (185 aa).

This sequence belongs to the RRF family.

It localises to the cytoplasm. Responsible for the release of ribosomes from messenger RNA at the termination of protein biosynthesis. May increase the efficiency of translation by recycling ribosomes from one round of translation to another. The polypeptide is Ribosome-recycling factor (Saccharopolyspora erythraea (strain ATCC 11635 / DSM 40517 / JCM 4748 / NBRC 13426 / NCIMB 8594 / NRRL 2338)).